The following is a 448-amino-acid chain: AYRQTENLLYGRSFHAEAHIVHHHSDFADVAEASKHLGGIAVVSIFLTNDKQRYNPTTNRALDTILNHLKDLIEFTEEEHVCRAENRRIKRTGIYSKLGVERACRENNPNYDADSPDGDPSNKCQLHKKARGCGDPIENVTFNPNDLLSSIPTYLTFEGGLTTPPCSESVIWIVAEHPAYISNKNIEYMNKLKSRIVNQTISDFGNLRPLHDPAERDVFRIIYGRYPPRREEDDERGDGRHDLRDDDDNYDDDDYYNDDYSNDDYYDDDYYYDDYDDDTDDDHKDDGRRDRGGGDDKGGRGKGDDRGGRDNGDNRTGRGNRNDRGRRGNGDDSGGRGNGNNRDGRGNGDSRDRNNGNGNGRENGGVRGNGNDRDGRRDNGNGGDNGTRRGNGDDRGGRRNEDRGENRRGKDDQERESEDGRRRRRRFNGRRRRRGRGDDKGDDKGDDN.

In terms of domain architecture, Alpha-carbonic anhydrase spans 1-222 (AYRQTENLLY…PAERDVFRII (222 aa)). Zn(2+) is bound at residue His-19. N-linked (GlcNAc...) asparagine glycosylation is found at Asn-139 and Asn-198. Positions 229–448 (RREEDDERGD…DKGDDKGDDN (220 aa)) are disordered. Positions 245 to 280 (DDDDNYDDDDYYNDDYSNDDYYDDDYYYDDYDDDTD) are enriched in acidic residues. Composition is skewed to basic and acidic residues over residues 281 to 334 (DDHK…DDSG) and 342 to 354 (RDGRGNGDSRDRN). Residue Asn-314 is glycosylated (N-linked (GlcNAc...) asparagine). A compositionally biased stretch (gly residues) spans 357–368 (NGNGRENGGVRG). A compositionally biased stretch (basic and acidic residues) spans 370-379 (GNDRDGRRDN). Asn-385 carries an N-linked (GlcNAc...) asparagine glycan. The span at 386–421 (GTRRGNGDDRGGRRNEDRGENRRGKDDQERESEDGR) shows a compositional bias: basic and acidic residues. A compositionally biased stretch (basic residues) spans 422-435 (RRRRRFNGRRRRRG). A compositionally biased stretch (basic and acidic residues) spans 436–448 (RGDDKGDDKGDDN).

It belongs to the alpha-carbonic anhydrase family. In terms of tissue distribution, component of the acid-insoluble and acid-soluble organic matrix of calcified layers of the shell (at protein level).

It localises to the secreted. It carries out the reaction hydrogencarbonate + H(+) = CO2 + H2O. Functionally, reversible hydration of carbon dioxide. The polypeptide is Putative carbonic anhydrase 2 (Lottia gigantea (Giant owl limpet)).